The chain runs to 371 residues: Mitogen-activated protein kinase homolog MMK2 (371 aa).

A Protein kinase domain is found at 37–323 (VPPIRSVGRG…VDEALCHPYM (287 aa)). ATP contacts are provided by residues 43 to 51 (VGRGAYGIV) and K66. D163 (proton acceptor) is an active-site residue. At T195 the chain carries Phosphothreonine. A TXY motif is present at residues 195 to 197 (TEY). Position 197 is a phosphotyrosine (Y197).

Belongs to the protein kinase superfamily. CMGC Ser/Thr protein kinase family. MAP kinase subfamily. Mg(2+) serves as cofactor. Dually phosphorylated on Thr-195 and Tyr-197, which activates the enzyme. Autophosphorylated.

It catalyses the reaction L-seryl-[protein] + ATP = O-phospho-L-seryl-[protein] + ADP + H(+). The catalysed reaction is L-threonyl-[protein] + ATP = O-phospho-L-threonyl-[protein] + ADP + H(+). With respect to regulation, activated by tyrosine and threonine phosphorylation. This chain is Mitogen-activated protein kinase homolog MMK2 (MMK2), found in Medicago sativa (Alfalfa).